A 540-amino-acid polypeptide reads, in one-letter code: MGFFTSVLGIIGFVIGIPIGLILGFFVLIYSQPSHQEYPPARPLVETSISVLLDLLPDIPLWMKNPDYERVDWFNKFISYMWPYLDKAVCGIIRSSVQPLFADYIGTFCIESIEFENLSLGTLPPTVHGVKFYETNEKELLFEPSIKWAGNPNIVLVLKVLSLRIRVQLVDLQFFAIVRVALKPLLPTFPCFGMVVVSLMEKPHVDFGLKVLGGDLMSIPGLYRYVQETIKRQVSSMYHWPQVLEIPILDSSTASVKKPVGLLHVSILRARNLLKKDLLGTSDPYVKLSLTGEKLPAKKTTIKKRNLNPEWNEHFKLIVKDPNSQVLQLEVFDWDKVGGHDRLGMQMIPLQKINPGERKEFNLDLIKNSNVVMDSGDKKKRGRLEVDLRYVPFREESIKRRKESREEKSSEDDDFLSQAGLLSVAVQSAKDVEGKKKHSNPYAVVLFRGEKKKTKMLKKTRDPRWNEEFQFTLEEPPVKESIRVEVMSKGTGFHFRSKEELGHVDINLDDVVDNGRINQKYHLINSRNGIIHIEIRWTTS.

A helical membrane pass occupies residues 9-29 (GIIGFVIGIPIGLILGFFVLI). The SMP-LTD domain maps to 67-249 (DYERVDWFNK…WPQVLEIPIL (183 aa)). The phospholipid binding stretch occupies residues 227–509 (QETIKRQVSS…ELGHVDINLD (283 aa)). 2 C2 domains span residues 240-363 (WPQV…EFNL) and 401-521 (RKES…NQKY). 5 residues coordinate Ca(2+): D277, D283, D333, D335, and D341.

The protein belongs to the synaptotagmin family. Ca(2+) serves as cofactor.

The protein resides in the membrane. Functionally, may be involved in membrane trafficking. The sequence is that of Synaptotagmin-3 (SYT3) from Arabidopsis thaliana (Mouse-ear cress).